The following is a 423-amino-acid chain: SH2 domain-containing protein 5 (423 aa).

Positions 28–146 (AQYVGLLPCG…LLCRSFQLAY (119 aa)) constitute a PID domain. The 97-residue stretch at 296-392 (WAFAGISRPC…LDMGRLNPTY (97 aa)) folds into the SH2 domain. Positions 394–423 (EQDCGPLGRPPRTLRPLSHAKSEAELQGLG) are disordered. Over residues 398 to 410 (GPLGRPPRTLRPL) the composition is skewed to low complexity.

Interacts with BCR.

Its subcellular location is the postsynaptic density. Functionally, may be involved in synaptic plasticity regulation through the control of Rac-GTP levels. The polypeptide is SH2 domain-containing protein 5 (Pongo abelii (Sumatran orangutan)).